The chain runs to 766 residues: Dolichyl pyrophosphate Glc1Man9GlcNAc2 alpha-1,3-glucosyltransferase (766 aa).

Transmembrane regions (helical) follow at residues Leu6–Val26, Tyr60–Phe80, Ile96–Ala116, Ser156–Ile176, Ile190–Leu210, Ala228–His248, Pro324–Ile344, Ala350–Val370, Ile395–Phe415, Ile423–Leu443, Val452–Leu472, and Leu482–Trp502.

The protein belongs to the ALG6/ALG8 glucosyltransferase family.

The protein resides in the endoplasmic reticulum membrane. The catalysed reaction is an alpha-D-Glc-(1-&gt;3)-alpha-D-Man-(1-&gt;2)-alpha-D-Man-(1-&gt;2)-alpha-D-Man-(1-&gt;3)-[alpha-D-Man-(1-&gt;2)-alpha-D-Man-(1-&gt;3)-[alpha-D-Man-(1-&gt;2)-alpha-D-Man-(1-&gt;6)]-alpha-D-Man-(1-&gt;6)]-beta-D-Man-(1-&gt;4)-beta-D-GlcNAc-(1-&gt;4)-alpha-D-GlcNAc-diphospho-di-trans,poly-cis-dolichol + a di-trans,poly-cis-dolichyl beta-D-glucosyl phosphate = an alpha-D-Glc-(1-&gt;3)-alpha-D-Glc-(1-&gt;3)-alpha-D-Man-(1-&gt;2)-alpha-D-Man-(1-&gt;2)-alpha-D-Man-(1-&gt;3)-[alpha-D-Man-(1-&gt;2)-alpha-D-Man-(1-&gt;3)-[alpha-D-Man-(1-&gt;2)-alpha-D-Man-(1-&gt;6)]-alpha-D-Man-(1-&gt;6)]-beta-D-Man-(1-&gt;4)-beta-D-GlcNAc-(1-&gt;4)-alpha-D-GlcNAc-diphospho-di-trans,poly-cis-dolichol + a di-trans,poly-cis-dolichyl phosphate + H(+). Its pathway is protein modification; protein glycosylation. Dolichyl pyrophosphate Glc1Man9GlcNAc2 alpha-1,3-glucosyltransferase that operates in the biosynthetic pathway of dolichol-linked oligosaccharides, the glycan precursors employed in protein asparagine (N)-glycosylation. The assembly of dolichol-linked oligosaccharides begins on the cytosolic side of the endoplasmic reticulum membrane and finishes in its lumen. The sequential addition of sugars to dolichol pyrophosphate produces dolichol-linked oligosaccharides containing fourteen sugars, including two GlcNAcs, nine mannoses and three glucoses. Once assembled, the oligosaccharide is transferred from the lipid to nascent proteins by oligosaccharyltransferases. In the lumen of the endoplasmic reticulum, adds the second glucose residue from dolichyl phosphate glucose (Dol-P-Glc) onto the lipid-linked oligosaccharide intermediate Glc(1)Man(9)GlcNAc(2)-PP-Dol to produce Glc(2)Man(9)GlcNAc(2)-PP-Dol. The protein is Dolichyl pyrophosphate Glc1Man9GlcNAc2 alpha-1,3-glucosyltransferase of Caenorhabditis elegans.